The following is a 126-amino-acid chain: Histone H2B type 1-C/E/G (126 aa).

Low complexity predominate over residues 1 to 12 (MPEPAKSAPAPK). The tract at residues 1–36 (MPEPAKSAPAPKKGSKKAVTKAQKKDGKKRKRSRKE) is disordered. Position 2 is an N-acetylproline (Pro2). At Glu3 the chain carries ADP-ribosyl glutamic acid. At Lys6 the chain carries N6-(2-hydroxyisobutyryl)lysine; alternate. Position 6 is an N6-(beta-hydroxybutyryl)lysine; alternate (Lys6). Residue Lys6 is modified to N6-acetyllysine; alternate. Lys6 bears the N6-butyryllysine; alternate mark. An N6-crotonyllysine; alternate modification is found at Lys6. An N6-lactoyllysine; alternate modification is found at Lys6. Lys6 participates in a covalent cross-link: Glycyl lysine isopeptide (Lys-Gly) (interchain with G-Cter in SUMO2); alternate. Ser7 carries the ADP-ribosylserine modification. Lys12 is modified (N6-(beta-hydroxybutyryl)lysine; alternate). N6-acetyllysine; alternate is present on residues Lys12 and Lys13. Residues Lys12 and Lys13 each carry the N6-crotonyllysine; alternate modification. Lys12 carries the post-translational modification N6-lactoyllysine; alternate. Lys13 is modified (N6-(2-hydroxyisobutyryl)lysine; alternate). The residue at position 15 (Ser15) is a Phosphoserine; by STK4/MST1. Lys16, Lys17, Lys21, and Lys24 each carry N6-acetyllysine; alternate. Residues Lys16, Lys17, Lys21, and Lys24 each carry the N6-crotonyllysine; alternate modification. Lys16, Lys17, Lys21, and Lys24 each carry N6-lactoyllysine; alternate. Position 17 is an N6-glutaryllysine; alternate (Lys17). Lys21 and Lys24 each carry N6-(2-hydroxyisobutyryl)lysine; alternate. Lys21 is subject to N6-(beta-hydroxybutyryl)lysine; alternate. N6-butyryllysine; alternate is present on Lys21. Lys21 participates in a covalent cross-link: Glycyl lysine isopeptide (Lys-Gly) (interchain with G-Cter in SUMO2); alternate. Position 25 is an N6-(2-hydroxyisobutyryl)lysine (Lys25). N6-(2-hydroxyisobutyryl)lysine; alternate is present on Lys35. The residue at position 35 (Lys35) is an N6-(beta-hydroxybutyryl)lysine; alternate. An N6-crotonyllysine; alternate modification is found at Lys35. Lys35 carries the post-translational modification N6-glutaryllysine; alternate. An N6-succinyllysine; alternate modification is found at Lys35. A Glycyl lysine isopeptide (Lys-Gly) (interchain with G-Cter in ubiquitin); alternate cross-link involves residue Lys35. PolyADP-ribosyl glutamic acid is present on Glu36. Ser37 carries the phosphoserine; by AMPK modification. 3 positions are modified to N6-(2-hydroxyisobutyryl)lysine; alternate: Lys44, Lys47, and Lys58. Lys44 carries the post-translational modification N6-lactoyllysine; alternate. Residues Lys44 and Lys47 each carry the N6-glutaryllysine; alternate modification. Residue Lys47 is modified to N6-methyllysine; alternate. At Lys58 the chain carries N6,N6-dimethyllysine; alternate. Arg80 is subject to Dimethylated arginine. The residue at position 86 (Lys86) is an N6-(2-hydroxyisobutyryl)lysine; alternate. Lys86 carries the post-translational modification N6-acetyllysine; alternate. N6-lactoyllysine; alternate is present on Lys86. The residue at position 86 (Lys86) is an N6,N6,N6-trimethyllysine; alternate. Omega-N-methylarginine occurs at positions 87 and 93. At Lys109 the chain carries N6-(2-hydroxyisobutyryl)lysine; alternate. N6-(beta-hydroxybutyryl)lysine; alternate is present on Lys109. Lys109 carries the N6-lactoyllysine; alternate modification. An N6-glutaryllysine; alternate modification is found at Lys109. Lys109 bears the N6-methyllysine; alternate mark. Residue Ser113 is glycosylated (O-linked (GlcNAc) serine). Thr116 carries the post-translational modification Phosphothreonine. An N6-(2-hydroxyisobutyryl)lysine; alternate mark is found at Lys117 and Lys121. N6-(beta-hydroxybutyryl)lysine; alternate is present on Lys117. An N6-lactoyllysine; alternate mark is found at Lys117 and Lys121. 2 positions are modified to N6-glutaryllysine; alternate: Lys117 and Lys121. 2 positions are modified to N6-succinyllysine; alternate: Lys117 and Lys121. Lys117 is subject to N6-methylated lysine; alternate. Lys121 participates in a covalent cross-link: Glycyl lysine isopeptide (Lys-Gly) (interchain with G-Cter in ubiquitin); alternate.

The protein belongs to the histone H2B family. In terms of assembly, the nucleosome is a histone octamer containing two molecules each of H2A, H2B, H3 and H4 assembled in one H3-H4 heterotetramer and two H2A-H2B heterodimers. The octamer wraps approximately 147 bp of DNA. Interacts with VRK1; the interaction is mediated by the nucleosome acidic patch, a cluster of negatively charged residues of H2A and H2B forming a cleft within the nucleosome core. Post-translationally, monoubiquitination at Lys-35 (H2BK34Ub) by the MSL1/MSL2 dimer is required for histone H3 'Lys-4' (H3K4me) and 'Lys-79' (H3K79me) methylation and transcription activation at specific gene loci, such as HOXA9 and MEIS1 loci. Similarly, monoubiquitination at Lys-121 (H2BK120Ub) by the RNF20/40 complex gives a specific tag for epigenetic transcriptional activation and is also prerequisite for histone H3 'Lys-4' and 'Lys-79' methylation. It also functions cooperatively with the FACT dimer to stimulate elongation by RNA polymerase II. H2BK120Ub also acts as a regulator of mRNA splicing: deubiquitination by USP49 is required for efficient cotranscriptional splicing of a large set of exons. Phosphorylated on Ser-15 (H2BS14ph) by STK4/MST1 during apoptosis; which facilitates apoptotic chromatin condensation. Also phosphorylated on Ser-15 in response to DNA double strand breaks (DSBs), and in correlation with somatic hypermutation and immunoglobulin class-switch recombination. Phosphorylation at Ser-37 (H2BS36ph) by AMPK in response to stress promotes transcription. In terms of processing, glcNAcylation at Ser-113 promotes monoubiquitination of Lys-121. It fluctuates in response to extracellular glucose, and associates with transcribed genes. Post-translationally, ADP-ribosylated by PARP1 or PARP2 on Ser-7 (H2BS6ADPr) in response to DNA damage. H2BS6ADPr promotes recruitment of CHD1L. Mono-ADP-ribosylated on Glu-3 (H2BE2ADPr) by PARP3 in response to single-strand breaks. Poly ADP-ribosylation on Glu-36 (H2BE35ADPr) by PARP1 regulates adipogenesis: it inhibits phosphorylation at Ser-37 (H2BS36ph), thereby blocking expression of pro-adipogenetic genes. Crotonylation (Kcr) is specifically present in male germ cells and marks testis-specific genes in post-meiotic cells, including X-linked genes that escape sex chromosome inactivation in haploid cells. Crotonylation marks active promoters and enhancers and confers resistance to transcriptional repressors. It is also associated with post-meiotically activated genes on autosomes. In terms of processing, hydroxybutyrylation of histones is induced by starvation. Post-translationally, lactylated in macrophages by EP300/P300 by using lactoyl-CoA directly derived from endogenous or exogenous lactate, leading to stimulates gene transcription.

The protein resides in the nucleus. It localises to the chromosome. Core component of nucleosome. Nucleosomes wrap and compact DNA into chromatin, limiting DNA accessibility to the cellular machineries which require DNA as a template. Histones thereby play a central role in transcription regulation, DNA repair, DNA replication and chromosomal stability. DNA accessibility is regulated via a complex set of post-translational modifications of histones, also called histone code, and nucleosome remodeling. This chain is Histone H2B type 1-C/E/G, found in Mus musculus (Mouse).